The sequence spans 536 residues: Chlorophyllide a oxygenase, chloroplastic (536 aa).

The N-terminal 36 residues, 1-36 (MNAAVFSPSALSLPISFSKTRSSFLSRKKGVKGEFR), are a transit peptide targeting the chloroplast. The stretch at 123–150 (IGTVKKELAGLQEELSKAHQQVHISEAR) forms a coiled coil. One can recognise a Rieske domain in the interval 221-321 (WYPVAFTADL…CLEQEGMIWI (101 aa)). 4 residues coordinate [2Fe-2S] cluster: Cys262, His264, Cys281, and His284. Residues Asp360, Asp364, His367, and His372 each coordinate Fe cation.

Its subcellular location is the plastid. The protein resides in the chloroplast membrane. It localises to the chloroplast thylakoid membrane. The enzyme catalyses chlorophyllide a + 2 NADPH + 2 O2 + 2 H(+) = chlorophyllide b + 2 NADP(+) + 3 H2O. The protein operates within porphyrin-containing compound metabolism; chlorophyll biosynthesis. Catalyzes a two-step oxygenase reaction involved in the synthesis of chlorophyll b. Acts specifically on the non-esterified chlorophyllide a and not on chlorophyll a. This is Chlorophyllide a oxygenase, chloroplastic (CAO) from Arabidopsis thaliana (Mouse-ear cress).